Consider the following 947-residue polypeptide: Mitogen-activated protein kinase kinase kinase 14 (947 aa).

2 disordered regions span residues 1–37 and 135–171; these read MAVMEMACPGAPGSAVGQQKELPKAKEKTPPLGKKQS and KGKRRSKARKKRKKKSSKSLAHAGVALAKPLPRTPEQ. Basic residues predominate over residues 135–151; it reads KGKRRSKARKKRKKKSS. Residues 400–655 form the Protein kinase domain; the sequence is ATHQLRLGRG…ELGGKVNRAL (256 aa). The segment at 401-653 is interaction with ZFP91; that stretch reads THQLRLGRGS…AAELGGKVNR (253 aa). Residues 406-414 and K429 each bind ATP; that span reads LGRGSFGEV. D515 serves as the catalytic Proton acceptor. T559 is modified (phosphothreonine). 2 disordered regions span residues 662 to 766 and 805 to 830; these read KSPW…ATVP and LSDDSEKNPSKASQSSRDTLSSGVHS. Positions 665 to 674 are enriched in basic and acidic residues; the sequence is WRGEYKEPRH. Residues 713–727 show a composition bias toward pro residues; that stretch reads LQPPLPPEPPEPNKS. Residues 741-752 show a composition bias toward low complexity; that stretch reads EPLPLSSLEPAP. The segment covering 814-829 has biased composition (polar residues); that stretch reads SKASQSSRDTLSSGVH.

Belongs to the protein kinase superfamily. STE Ser/Thr protein kinase family. MAP kinase kinase kinase subfamily. Interacts with TRAF2, TRAF5, TRAF6, IKKA and NFKB2/P100. Interacts with TRAF3 and PELI3. Interacts with NIBP; the interaction is direct. Interacts with ARRB1 and ARRB2. Interacts with GRB10. Interacts with ZFP91. Interacts with NLRP12; this interaction promotes proteasomal degradation of MAP3K14. Directly interacts with DDX3X. Interacts (via C-terminus and kinase domain) with PPPC3A (via N-terminus) and PPP3CB. In terms of processing, autophosphorylated. Phosphorylation at Thr-559 is required to activate its kinase activity and 'Lys-63'-linked polyubiquitination. Phosphorylated by CHUK/IKKA leading to MAP3K14 destabilization. Ubiquitinated. Undergoes both 'Lys-48'- and 'Lys-63'-linked polyubiquitination. 'Lys-48'-linked polyubiquitination leads to its degradation by the proteasome, while 'Lys-63'-linked polyubiquitination stabilizes and activates it. Weakly expressed in testis, small intestine, spleen, thymus, peripheral blood leukocytes, prostate, ovary and colon.

It is found in the cytoplasm. It catalyses the reaction L-seryl-[protein] + ATP = O-phospho-L-seryl-[protein] + ADP + H(+). The catalysed reaction is L-threonyl-[protein] + ATP = O-phospho-L-threonyl-[protein] + ADP + H(+). Its function is as follows. Lymphotoxin beta-activated kinase which seems to be exclusively involved in the activation of NF-kappa-B and its transcriptional activity. Phosphorylates CHUK/IKKA, thereby promoting proteolytic processing of NFKB2/P100, which leads to NF-kappa-B activation via the non-canonical pathway. Has an essential role in the non-canonical NF-kappa-B signaling that regulates genes encoding molecules involved in B-cell survival, lymphoid organogenesis, and immune response. Could act in a receptor-selective manner. The polypeptide is Mitogen-activated protein kinase kinase kinase 14 (Homo sapiens (Human)).